Reading from the N-terminus, the 65-residue chain is uncharacterized protein (65 aa).

The next 2 helical transmembrane spans lie at 4–24 (AWLFWSVIVLYFFIKFFDKVL) and 39–59 (LPIPMKILLTIALVLFLFIVF).

The protein localises to the membrane. This is an uncharacterized protein from Streptococcus pneumoniae serotype 2 (strain D39 / NCTC 7466).